A 399-amino-acid chain; its full sequence is Ribonucleoside-diphosphate reductase small chain 1 (399 aa).

Residues serine 15, serine 24, and serine 41 each carry the phosphoserine modification. 3 residues coordinate Fe cation: aspartate 145, glutamate 176, and histidine 179. Tyrosine 183 is an active-site residue. Fe cation contacts are provided by glutamate 239, glutamate 273, and histidine 276.

The protein belongs to the ribonucleoside diphosphate reductase small chain family. In terms of assembly, heterotetramer of two large (R1) and two small (R2) subunits. S.cerevisiae has two different R1 subunits (RNR1 and RNR3) and two different R2 subunits (RNR2 and RNR4). The functional form of the small subunits is a RNR2-RNR4 heterodimer, where RNR2 provides the iron-radical center and RNR4 is required for proper folding of RNR2 and assembly with the large subunits. Under normal growth conditions, the active form of the large subunits is a homodimer of the constitutively expressed RNR1. In damaged cells or cells arrested for DNA synthesis, the reductase consists of multiple species because of the association of the small subunits (RNR2-RNR4) with either the RNR1 homodimer or a heterodimer of RNR1 and the damage-inducible RNR3. Interacts with DIF1. Requires Fe cation as cofactor.

It is found in the nucleus. It carries out the reaction a 2'-deoxyribonucleoside 5'-diphosphate + [thioredoxin]-disulfide + H2O = a ribonucleoside 5'-diphosphate + [thioredoxin]-dithiol. Functionally, provides the precursors necessary for DNA synthesis. Catalyzes the biosynthesis of deoxyribonucleotides from the corresponding ribonucleotides. RNR2 provides the diiron-tyrosyl radical center. The sequence is that of Ribonucleoside-diphosphate reductase small chain 1 (RNR2) from Saccharomyces cerevisiae (strain ATCC 204508 / S288c) (Baker's yeast).